Here is a 113-residue protein sequence, read N- to C-terminus: Small ribosomal subunit protein bS6 (113 aa).

The protein belongs to the bacterial ribosomal protein bS6 family.

Functionally, binds together with bS18 to 16S ribosomal RNA. The chain is Small ribosomal subunit protein bS6 from Flavobacterium psychrophilum (strain ATCC 49511 / DSM 21280 / CIP 103535 / JIP02/86).